The following is a 302-amino-acid chain: Phosphoribosylaminoimidazole-succinocarboxamide synthase (302 aa).

Belongs to the SAICAR synthetase family.

The enzyme catalyses 5-amino-1-(5-phospho-D-ribosyl)imidazole-4-carboxylate + L-aspartate + ATP = (2S)-2-[5-amino-1-(5-phospho-beta-D-ribosyl)imidazole-4-carboxamido]succinate + ADP + phosphate + 2 H(+). The protein operates within purine metabolism; IMP biosynthesis via de novo pathway; 5-amino-1-(5-phospho-D-ribosyl)imidazole-4-carboxamide from 5-amino-1-(5-phospho-D-ribosyl)imidazole-4-carboxylate: step 1/2. The chain is Phosphoribosylaminoimidazole-succinocarboxamide synthase from Cupriavidus necator (strain ATCC 17699 / DSM 428 / KCTC 22496 / NCIMB 10442 / H16 / Stanier 337) (Ralstonia eutropha).